A 136-amino-acid polypeptide reads, in one-letter code: Glutaredoxin-C8 (136 aa).

In terms of domain architecture, Glutaredoxin spans 33–135 (SSFVKSTVKA…KLLNIDVKED (103 aa)). A disulfide bond links C53 and C56.

It belongs to the glutaredoxin family. CPYC subfamily.

It localises to the cytoplasm. Has a glutathione-disulfide oxidoreductase activity in the presence of NADPH and glutathione reductase. Reduces low molecular weight disulfides and proteins. This is Glutaredoxin-C8 (GRXC8) from Oryza sativa subsp. japonica (Rice).